The primary structure comprises 137 residues: Methylmalonyl-CoA decarboxylase subunit delta (137 aa).

A helical membrane pass occupies residues 30–50 (VTVVLGMGITVVALIFLMYII).

The protein belongs to the OadG family. As to quaternary structure, the methylmalonyl-CoA decarboxylase is composed of four subunits: the carboxyltransferase alpha subunit (MmdA), the tunnel beta subunit (MmdB), the biotin-containing gamma subunit (MmdC) and the delta subunit (MmdD).

It localises to the cell membrane. It catalyses the reaction (S)-methylmalonyl-CoA + Na(+)(in) + H(+)(out) = propanoyl-CoA + Na(+)(out) + CO2. Subunit of the sodium ion pump methylmalonyl-CoA decarboxylase, which converts the chemical energy of a decarboxylation reaction into an electrochemical gradient of Na(+) ions across the cytoplasmic membrane, thereby creating a sodium ion motive force that is used for ATP synthesis. The delta subunit is required for catalytic activity as well as for the proper assembly of the individual subunits to an enzyme complex. This is Methylmalonyl-CoA decarboxylase subunit delta from Propionigenium modestum.